The chain runs to 283 residues: Release factor glutamine methyltransferase (283 aa).

S-adenosyl-L-methionine is bound by residues 121-125 (GTGSG), D144, and N188. 188–191 (NPPY) contacts substrate.

This sequence belongs to the protein N5-glutamine methyltransferase family. PrmC subfamily.

It carries out the reaction L-glutaminyl-[peptide chain release factor] + S-adenosyl-L-methionine = N(5)-methyl-L-glutaminyl-[peptide chain release factor] + S-adenosyl-L-homocysteine + H(+). Functionally, methylates the class 1 translation termination release factors RF1/PrfA and RF2/PrfB on the glutamine residue of the universally conserved GGQ motif. This chain is Release factor glutamine methyltransferase, found in Bacillus anthracis.